Consider the following 217-residue polypeptide: Holliday junction branch migration complex subunit RuvA (217 aa).

The tract at residues 1–64 (MIGKLTGILD…EDAIRLFGFE (64 aa)) is domain I. A domain II region spans residues 65–145 (TKVEQDWFCL…NAPHQSMPHF (81 aa)). The segment at 146–160 (VSYSSETSSQAGTQH) is flexible linker. A domain III region spans residues 161 to 217 (TGHQHSMDALAALTKLGFERDQATHALQEAIKAFEGETPSSALLIRHSLKLLSSHLK).

The protein belongs to the RuvA family. In terms of assembly, homotetramer. Forms an RuvA(8)-RuvB(12)-Holliday junction (HJ) complex. HJ DNA is sandwiched between 2 RuvA tetramers; dsDNA enters through RuvA and exits via RuvB. An RuvB hexamer assembles on each DNA strand where it exits the tetramer. Each RuvB hexamer is contacted by two RuvA subunits (via domain III) on 2 adjacent RuvB subunits; this complex drives branch migration. In the full resolvosome a probable DNA-RuvA(4)-RuvB(12)-RuvC(2) complex forms which resolves the HJ.

Its subcellular location is the cytoplasm. Its function is as follows. The RuvA-RuvB-RuvC complex processes Holliday junction (HJ) DNA during genetic recombination and DNA repair, while the RuvA-RuvB complex plays an important role in the rescue of blocked DNA replication forks via replication fork reversal (RFR). RuvA specifically binds to HJ cruciform DNA, conferring on it an open structure. The RuvB hexamer acts as an ATP-dependent pump, pulling dsDNA into and through the RuvAB complex. HJ branch migration allows RuvC to scan DNA until it finds its consensus sequence, where it cleaves and resolves the cruciform DNA. The sequence is that of Holliday junction branch migration complex subunit RuvA from Bartonella bacilliformis (strain ATCC 35685 / KC583 / Herrer 020/F12,63).